We begin with the raw amino-acid sequence, 337 residues long: ATP-dependent 6-phosphofructokinase (337 aa).

An ATP-binding site is contributed by Gly-11. Residue 21-25 (RAVVR) participates in ADP binding. ATP contacts are provided by residues 72 to 73 (RY) and 102 to 105 (GDGS). Asp-103 lines the Mg(2+) pocket. 125–127 (TID) is a binding site for substrate. Asp-127 acts as the Proton acceptor in catalysis. Arg-154 is an ADP binding site. Substrate contacts are provided by residues Arg-162 and 169–171 (MGR). ADP-binding positions include 185 to 187 (GAD), Lys-212, and 214 to 216 (KNH). Substrate-binding positions include Glu-223, Arg-245, and 251-254 (HILR).

It belongs to the phosphofructokinase type A (PFKA) family. ATP-dependent PFK group I subfamily. Prokaryotic clade 'B1' sub-subfamily. As to quaternary structure, homotetramer. The cofactor is Mg(2+).

The protein localises to the cytoplasm. It carries out the reaction beta-D-fructose 6-phosphate + ATP = beta-D-fructose 1,6-bisphosphate + ADP + H(+). Its pathway is carbohydrate degradation; glycolysis; D-glyceraldehyde 3-phosphate and glycerone phosphate from D-glucose: step 3/4. Its activity is regulated as follows. Allosterically activated by ADP and other diphosphonucleosides, and allosterically inhibited by phosphoenolpyruvate. Catalyzes the phosphorylation of D-fructose 6-phosphate to fructose 1,6-bisphosphate by ATP, the first committing step of glycolysis. The sequence is that of ATP-dependent 6-phosphofructokinase from Streptococcus pyogenes serotype M28 (strain MGAS6180).